Consider the following 253-residue polypeptide: E3 ubiquitin-protein ligase MARCHF3 (253 aa).

The RING-CH-type zinc-finger motif lies at 63-123 (SPFNDRPMCR…ELCHFRFAVE (61 aa)). C71, C74, C87, C89, H97, C100, C113, and C116 together coordinate Zn(2+). Transmembrane regions (helical) follow at residues 145–165 (LFGD…SGWL) and 182–202 (AVGL…WTLV). Residues S237 and S243 each carry the phosphoserine modification.

As to quaternary structure, interacts with MARCHF2 and STX6.

The protein localises to the cytoplasmic vesicle membrane. The protein resides in the early endosome membrane. It catalyses the reaction S-ubiquitinyl-[E2 ubiquitin-conjugating enzyme]-L-cysteine + [acceptor protein]-L-lysine = [E2 ubiquitin-conjugating enzyme]-L-cysteine + N(6)-ubiquitinyl-[acceptor protein]-L-lysine.. It participates in protein modification; protein ubiquitination. E3 ubiquitin-protein ligase which may be involved in endosomal trafficking. E3 ubiquitin ligases accept ubiquitin from an E2 ubiquitin-conjugating enzyme in the form of a thioester and then directly transfer the ubiquitin to targeted substrates. The chain is E3 ubiquitin-protein ligase MARCHF3 (MARCHF3) from Bos taurus (Bovine).